We begin with the raw amino-acid sequence, 212 residues long: Fe/S biogenesis protein NfuA (212 aa).

The [4Fe-4S] cluster site is built by cysteine 169 and cysteine 172.

Belongs to the NfuA family. As to quaternary structure, homodimer. It depends on [4Fe-4S] cluster as a cofactor.

In terms of biological role, involved in iron-sulfur cluster biogenesis. Binds a 4Fe-4S cluster, can transfer this cluster to apoproteins, and thereby intervenes in the maturation of Fe/S proteins. Could also act as a scaffold/chaperone for damaged Fe/S proteins. The protein is Fe/S biogenesis protein NfuA of Acinetobacter baumannii (strain SDF).